The chain runs to 520 residues: Cysteine--tRNA ligase (520 aa).

A Zn(2+)-binding site is contributed by cysteine 29. The 'HIGH' region signature appears at 31 to 41 (PTVYNYPHLGN). Positions 227, 252, and 256 each coordinate Zn(2+). Positions 301 to 305 (KMSKS) match the 'KMSKS' region motif. ATP is bound at residue lysine 304.

Belongs to the class-I aminoacyl-tRNA synthetase family. In terms of assembly, monomer. The cofactor is Zn(2+).

The protein resides in the cytoplasm. The enzyme catalyses tRNA(Cys) + L-cysteine + ATP = L-cysteinyl-tRNA(Cys) + AMP + diphosphate. This Treponema pallidum (strain Nichols) protein is Cysteine--tRNA ligase (cysS).